We begin with the raw amino-acid sequence, 125 residues long: Small ribosomal subunit protein uS13 (125 aa).

The interval 92-125 (RRHLPVHGQRTKTNARTRKGPKKTVAGKKKAGKK) is disordered.

Belongs to the universal ribosomal protein uS13 family. As to quaternary structure, part of the 30S ribosomal subunit. Forms a loose heterodimer with protein S19. Forms two bridges to the 50S subunit in the 70S ribosome.

Located at the top of the head of the 30S subunit, it contacts several helices of the 16S rRNA. In the 70S ribosome it contacts the 23S rRNA (bridge B1a) and protein L5 of the 50S subunit (bridge B1b), connecting the 2 subunits; these bridges are implicated in subunit movement. Contacts the tRNAs in the A and P-sites. The protein is Small ribosomal subunit protein uS13 of Saccharopolyspora erythraea (strain ATCC 11635 / DSM 40517 / JCM 4748 / NBRC 13426 / NCIMB 8594 / NRRL 2338).